A 186-amino-acid chain; its full sequence is Proline-rich protein 3 (186 aa).

A disordered region spans residues 1–97 (MPKRKKQNQP…LGPRSSPYGR (97 aa)). Pro residues-rich tracts occupy residues 33–44 (MGPPSLLGPPPM) and 67–79 (MIPP…PPPR). A C3H1-type zinc finger spans residues 153–181 (KSDRPVCRHFSKKGHCRYEDHCAFYHPGV).

In Rattus norvegicus (Rat), this protein is Proline-rich protein 3 (Prr3).